A 412-amino-acid chain; its full sequence is MEARLSETLGLPSPNLNHCHFPNEFNSLFTHFSDLTSVQSPIVRNPKLKTKSSQKPPKFSANFRRSDPPFASTSISDPTHEKPGPEFLKWIKPASRSSPRIQTLIKQLSVWERAIIGAGAGGLAGAFTYVTLLPLDAIKTKLQTKGASQVYSNTFDAIVKTFQAKGILGFYSGVSAVIVGSTFSSAVYFGTCEFGKSLLSKFPDFPTVLIPPTAGAMGNIISSAIMVPKELITQRMQAGASGRSYQVLLKILEKDGILGLYAGYSATLLRNLPAGVLSYSSFEYLKAAVLEKTKQSHLEPLQSVCCGALAGAISASITTPLDVVKTRLMTQIHVEAVDKLGGAMYTGVAGTVKQILTEEGWVGFTRGMGPRVVHSACFSAIGYFAFETARLTILNEYLKRKEESEANVAADS.

A chloroplast-targeting transit peptide spans 1-92; it reads MEARLSETLG…PGPEFLKWIK (92 aa). Positions 43–83 are disordered; the sequence is VRNPKLKTKSSQKPPKFSANFRRSDPPFASTSISDPTHEKP. 3 Solcar repeats span residues 112-198, 206-288, and 298-392; these read ERAI…GKSL, PTVL…LKAA, and LEPL…ARLT. Transmembrane regions (helical) follow at residues 115 to 135, 167 to 187, 208 to 228, 262 to 282, 303 to 323, and 365 to 385; these read IIGAGAGGLAGAFTYVTLLPL, ILGFYSGVSAVIVGSTFSSAV, VLIPPTAGAMGNIISSAIMVP, AGYSATLLRNLPAGVLSYSSF, SVCCGALAGAISASITTPLDV, and TRGMGPRVVHSACFSAIGYFA.

It belongs to the mitochondrial carrier (TC 2.A.29) family. In terms of tissue distribution, expressed in leaves, developing flowers and siliques.

The protein localises to the plastid. It localises to the chloroplast inner membrane. Functionally, probably involved in iron transport into chloroplasts. The chain is Protein MITOFERRINLIKE 1, chloroplastic (MFL1) from Arabidopsis thaliana (Mouse-ear cress).